We begin with the raw amino-acid sequence, 463 residues long: Polyadenylate-binding protein-interacting protein 1 (463 aa).

The segment at 1–86 (MSDGFERAPG…HKRTSPAAQL (86 aa)) is disordered. The MIF4G domain maps to 145 to 362 (TEYVQDFLNH…LKLVELRSSN (218 aa)). Positions 420-442 (RDYDENGTDGGDSYFEDDDDNEM) are disordered. Acidic residues predominate over residues 433–442 (YFEDDDDNEM).

Interacts with the RRM1-RRM2 and C-terminal regions of epabp.

The protein resides in the cytoplasm. Acts as a coactivator in the regulation of translation initiation of poly(A)-containing mRNAs. This is Polyadenylate-binding protein-interacting protein 1 from Xenopus laevis (African clawed frog).